The chain runs to 220 residues: Protein-methionine-sulfoxide reductase heme-binding subunit MsrQ (220 aa).

5 consecutive transmembrane segments (helical) span residues 20 to 40 (IWLL…LGAS), 52 to 72 (EHTL…VTPI), 86 to 106 (ALGL…MVLD), 122 to 142 (PFIT…LTSN), and 159 to 179 (LVYV…KSWP).

This sequence belongs to the MsrQ family. Heterodimer of a catalytic subunit (MsrP) and a heme-binding subunit (MsrQ). FMN is required as a cofactor. It depends on heme b as a cofactor.

It localises to the cell inner membrane. In terms of biological role, part of the MsrPQ system that repairs oxidized periplasmic proteins containing methionine sulfoxide residues (Met-O), using respiratory chain electrons. Thus protects these proteins from oxidative-stress damage caused by reactive species of oxygen and chlorine generated by the host defense mechanisms. MsrPQ is essential for the maintenance of envelope integrity under bleach stress, rescuing a wide series of structurally unrelated periplasmic proteins from methionine oxidation. MsrQ provides electrons for reduction to the reductase catalytic subunit MsrP, using the quinone pool of the respiratory chain. This chain is Protein-methionine-sulfoxide reductase heme-binding subunit MsrQ, found in Brucella anthropi (strain ATCC 49188 / DSM 6882 / CCUG 24695 / JCM 21032 / LMG 3331 / NBRC 15819 / NCTC 12168 / Alc 37) (Ochrobactrum anthropi).